A 372-amino-acid polypeptide reads, in one-letter code: Alanine dehydrogenase 2 (372 aa).

Residue His95 is part of the active site. An NAD(+)-binding site is contributed by 169 to 199; sequence KVTIIGGGQAGTNAAKIALGLGADVTILDVN.

Belongs to the AlaDH/PNT family.

The enzyme catalyses L-alanine + NAD(+) + H2O = pyruvate + NH4(+) + NADH + H(+). It functions in the pathway amino-acid degradation; L-alanine degradation via dehydrogenase pathway; NH(3) and pyruvate from L-alanine: step 1/1. Its function is as follows. May play a role in cell wall synthesis as L-alanine is an important constituent of the peptidoglycan layer. The polypeptide is Alanine dehydrogenase 2 (ald2) (Staphylococcus aureus (strain Mu50 / ATCC 700699)).